A 1004-amino-acid chain; its full sequence is Sodium/potassium-transporting ATPase subunit alpha-B (1004 aa).

Transmembrane regions (helical) follow at residues 76–96 and 110–126; these read LFGG…LAYG and NLYL…VTGI. Positions 197–216 are disordered; that stretch reads SSLTGESEPQARSPEFTNDN. A run of 2 helical transmembrane segments spans residues 272–294 and 301–329; these read FIHI…AFVL and AVVF…TLTA. D357 functions as the 4-aspartylphosphate intermediate in the catalytic mechanism. K489 contacts ATP. Positions 698 and 702 each coordinate Mg(2+). 4 consecutive transmembrane segments (helical) span residues 768–791, 828–855, 897–918, and 934–959; these read ISPF…ILCI, ERLI…VIMA, SSCH…LIIS, and ILNF…DKGL.

This sequence belongs to the cation transport ATPase (P-type) (TC 3.A.3) family. Type IIC subfamily. As to quaternary structure, the sodium/potassium-transporting ATPase is composed of a catalytic alpha subunit, an auxiliary non-catalytic beta subunit and an additional regulatory subunit.

It localises to the cell membrane. It carries out the reaction K(+)(out) + Na(+)(in) + ATP + H2O = K(+)(in) + Na(+)(out) + ADP + phosphate + H(+). Functionally, this is the catalytic component of the active enzyme, which catalyzes the hydrolysis of ATP coupled with the exchange of sodium and potassium ions across the plasma membrane. This action creates the electrochemical gradient of sodium and potassium ions, providing the energy for active transport of various nutrients. The polypeptide is Sodium/potassium-transporting ATPase subunit alpha-B (Artemia franciscana (Brine shrimp)).